The sequence spans 252 residues: Imidazole glycerol phosphate synthase subunit HisF (252 aa).

Active-site residues include aspartate 11 and aspartate 130.

It belongs to the HisA/HisF family. In terms of assembly, heterodimer of HisH and HisF.

The protein localises to the cytoplasm. The enzyme catalyses 5-[(5-phospho-1-deoxy-D-ribulos-1-ylimino)methylamino]-1-(5-phospho-beta-D-ribosyl)imidazole-4-carboxamide + L-glutamine = D-erythro-1-(imidazol-4-yl)glycerol 3-phosphate + 5-amino-1-(5-phospho-beta-D-ribosyl)imidazole-4-carboxamide + L-glutamate + H(+). Its pathway is amino-acid biosynthesis; L-histidine biosynthesis; L-histidine from 5-phospho-alpha-D-ribose 1-diphosphate: step 5/9. Its function is as follows. IGPS catalyzes the conversion of PRFAR and glutamine to IGP, AICAR and glutamate. The HisF subunit catalyzes the cyclization activity that produces IGP and AICAR from PRFAR using the ammonia provided by the HisH subunit. The sequence is that of Imidazole glycerol phosphate synthase subunit HisF from Bacillus thuringiensis (strain Al Hakam).